We begin with the raw amino-acid sequence, 930 residues long: Isoleucine--tRNA ligase (930 aa).

A 'HIGH' region motif is present at residues 57-67 (PYANGNIHVGH). Glu-554 contributes to the L-isoleucyl-5'-AMP binding site. The short motif at 595-599 (KMSKS) is the 'KMSKS' region element. Lys-598 is a binding site for ATP. Zn(2+)-binding residues include Cys-888, Cys-891, Cys-908, and Cys-911.

It belongs to the class-I aminoacyl-tRNA synthetase family. IleS type 1 subfamily. In terms of assembly, monomer. Zn(2+) serves as cofactor.

It is found in the cytoplasm. It carries out the reaction tRNA(Ile) + L-isoleucine + ATP = L-isoleucyl-tRNA(Ile) + AMP + diphosphate. In terms of biological role, catalyzes the attachment of isoleucine to tRNA(Ile). As IleRS can inadvertently accommodate and process structurally similar amino acids such as valine, to avoid such errors it has two additional distinct tRNA(Ile)-dependent editing activities. One activity is designated as 'pretransfer' editing and involves the hydrolysis of activated Val-AMP. The other activity is designated 'posttransfer' editing and involves deacylation of mischarged Val-tRNA(Ile). This chain is Isoleucine--tRNA ligase, found in Streptococcus pneumoniae (strain ATCC 700669 / Spain 23F-1).